We begin with the raw amino-acid sequence, 551 residues long: uncharacterized protein (551 aa).

The transit peptide at methionine 1 to tryptophan 36 directs the protein to the mitochondrion. Residues threonine 203–glutamate 315 are a coiled coil. Positions arginine 354–lysine 389 are disordered. Residues proline 366 to glycine 384 are compositionally biased toward polar residues. Residues lysine 405–serine 439 are a coiled coil. Residues leucine 519–aspartate 551 form a disordered region. Polar residues predominate over residues methionine 541–aspartate 551.

Interacts with NOD2.

The protein resides in the mitochondrion. This is an uncharacterized protein from Homo sapiens (Human).